The primary structure comprises 156 residues: Small ribosomal subunit protein uS7 (156 aa).

Belongs to the universal ribosomal protein uS7 family. In terms of assembly, part of the 30S ribosomal subunit. Contacts proteins S9 and S11.

One of the primary rRNA binding proteins, it binds directly to 16S rRNA where it nucleates assembly of the head domain of the 30S subunit. Is located at the subunit interface close to the decoding center, probably blocks exit of the E-site tRNA. This is Small ribosomal subunit protein uS7 from Nitrosococcus oceani (strain ATCC 19707 / BCRC 17464 / JCM 30415 / NCIMB 11848 / C-107).